We begin with the raw amino-acid sequence, 340 residues long: MASTRRPVGARTLLACASLLAAMGLGVPESAEPVGTHARPQPPGAELPAPPANSPPEPTIAHAHSVDPRDAWMLFVKQSDKGINSKRRSKARRLKLGLPGPPGPPGPQGPPGPFIPSEVLLKEFQLLLKGAVRQRESHLEHCTRDLTTPASGSPSRVPAAQELDSQDPGALLALLAATLAQGPRAPRVEAAFHCRLRRDVQVDRRALHELGIYYLPEVEGAFHRGPGLNLTSGQYTAPVAGFYALAATLHVALTEQPRKGPTRPRDRLRLLICIQSLCQHNASLETVMGLENSSELFTISVNGVLYLQAGHYTSVFLDNASGSSLTVRSGSHFSAILLGL.

Positions M1 to G24 are cleaved as a signal peptide. Disordered regions lie at residues S30–A63, S79–G112, and H141–Q161. Residues P40 to P58 are compositionally biased toward pro residues. Residues N84–K95 are compositionally biased toward basic residues. A hydroxyproline mark is found at P99, P101, P102, P104, P105, and P107. Residues P99–G112 show a composition bias toward pro residues. Residues D145 to P154 are compositionally biased toward polar residues. In terms of domain architecture, C1q spans A185–L340. 4 N-linked (GlcNAc...) asparagine glycosylation sites follow: N229, N281, N292, and N319.

This sequence belongs to the adipolin/erythroferrone family. In terms of assembly, homodimer; disulfide-linked. Forms trimer, hexamers and higher molecular weight oligomers. May form heteromeric complexes with C1QTNF2 and C1QTNF12 and, to a lesser extent, with C1QTNF5 and C1QTNF10. Interacts with BMP5 and BMP7; the interaction inhibits BMP-induced transcription of HAMP. Interacts with BMP6; the interaction inhibits BMP-induced transcription of HAMP. Interacts with BMP2. Interacts with heterodimers composed of BMP2 and BMP6 in vitro, the interaction inhibits the heterodimer binding to its receptor BMPR1A /ALK3 and thereby suppresses expression of HAMP. Post-translationally, N-glycosylated; required for secretion of the mature protein. Expressed in the soleus muscle in the leg (at protein level). Found in blood (at protein level). Weakly expressed in the heart (at protein level). Predominantly expressed in skeletal muscle and, at much lower levels, in other tissues, including lung, eye, smooth muscle, brain and kidney. Within skeletal muscles, higher expression levels in soleus as compared with plantaris. Expressed in osteoblasts, mature osteoclasts and erythroblasts. When fasting, females tend to have higher circulating levels than males. Obese mice tend to have lower expression and circulating levels as compared to lean animals. Following EPO treatment, only expressed in bone marrow and spleen.

It localises to the secreted. Functionally, iron-regulatory hormone that acts as an erythroid regulator after hemorrhage: produced by erythroblasts following blood loss and mediates suppression of hepcidin (HAMP) expression in the liver, thereby promoting increased iron absorption and mobilization from stores. Promotes lipid uptake into adipocytes and hepatocytes via transcriptional up-regulation of genes involved in fatty acid uptake. Inhibits apoptosis and inflammatory response in cardiomyocytes via promotion of sphingosine-1-phosphate (S1P) and cAMP-dependent activation of AKT signaling. Inhibits autophagy induced by nutrient deficiency in hepatocytes via promoting the phosphorylation of IRS1, AKT, and MTOR, and thereby subsequent activation of the AKT-MTOR signaling pathway. Negatively regulates the differentiation of osteoblasts, potentially via sequestering BMP2, and thereby inhibits the activation of SMAD signaling. The reduction in BMP2 signaling in osteoblasts also results in an increase in expression of the osteoclastogenesis-promoting factors TNFSF11/RANKL and SOST, thereby indirectly promotes bone resorption. This chain is Erythroferrone, found in Mus musculus (Mouse).